Reading from the N-terminus, the 107-residue chain is Iron-sulfur cluster assembly protein CyaY (107 aa).

Belongs to the frataxin family.

In terms of biological role, involved in iron-sulfur (Fe-S) cluster assembly. May act as a regulator of Fe-S biogenesis. The chain is Iron-sulfur cluster assembly protein CyaY from Neisseria meningitidis serogroup C / serotype 2a (strain ATCC 700532 / DSM 15464 / FAM18).